The chain runs to 102 residues: MTISIMGNNVTPIQPNESVNQVKRSPSEAQANFASTLKNAIEDLNHIQLESDKKTEAFASGKIDDLHDVMITAQKSSVTLETTVQVQKKVIDAYNEIMRMQV.

This sequence belongs to the FliE family.

The protein localises to the bacterial flagellum basal body. The protein is Flagellar hook-basal body complex protein FliE of Oceanobacillus iheyensis (strain DSM 14371 / CIP 107618 / JCM 11309 / KCTC 3954 / HTE831).